The chain runs to 506 residues: Secreted RxLR effector protein 134 (506 aa).

An N-terminal signal peptide occupies residues 1-19; that stretch reads MQGAYCVAVALLIAASGQA. The RxLR-dEER motif lies at 50 to 71; that stretch reads RVLQVSHYPKDDLMLLAGNEER.

This sequence belongs to the RxLR effector family.

It is found in the secreted. It localises to the host nucleus. In terms of biological role, secreted effector that completely suppresses the host cell death induced by cell death-inducing proteins. The sequence is that of Secreted RxLR effector protein 134 from Plasmopara viticola (Downy mildew of grapevine).